Consider the following 513-residue polypeptide: Acetylcholine receptor subunit delta (513 aa).

A signal peptide spans 1 to 18; the sequence is MAVLLALFGALVLSGGLC. Residues 19–244 lie on the Extracellular side of the membrane; the sequence is VNQEERLIHH…ITFYLIIKRK (226 aa). N-linked (GlcNAc...) asparagine glycans are attached at residues Asn88 and Asn161. A disulfide bridge connects residues Cys148 and Cys162. Helical transmembrane passes span 245 to 269, 277 to 295, and 311 to 332; these read PLFY…VFYL, MTLV…LLVS, and YLLF…VLNF. At 333–467 the chain is on the cytoplasmic side; sequence HFRTPSTHVM…WNRVARTLDR (135 aa). At Tyr388 the chain carries Phosphotyrosine; by Tyr-kinases. The helical transmembrane segment at 468 to 490 threads the bilayer; it reads LCLFLITPMLVVGTLWIFLMGIY.

It belongs to the ligand-gated ion channel (TC 1.A.9) family. Acetylcholine receptor (TC 1.A.9.1) subfamily. As to quaternary structure, pentamer of two alpha chains, and one each of the beta, delta, and gamma chains.

Its subcellular location is the postsynaptic cell membrane. The protein resides in the cell membrane. It catalyses the reaction K(+)(in) = K(+)(out). It carries out the reaction Na(+)(in) = Na(+)(out). Its function is as follows. After binding acetylcholine, the AChR responds by an extensive change in conformation that affects all subunits and leads to opening of an ion-conducting channel across the plasma membrane. The chain is Acetylcholine receptor subunit delta (CHRND) from Gallus gallus (Chicken).